The sequence spans 269 residues: Aquaporin-1 (269 aa).

At 2–11 (ASEFKKKLFW) the chain is on the cytoplasmic side. The helical transmembrane segment at 12-29 (RAVVAEFLATTLFVFISI) threads the bilayer. At 30–46 (GSALGFKYPVGNNQTAV) the chain is on the extracellular side. Residue Asn-42 is glycosylated (N-linked (GlcNAc...) asparagine). Residues 47-65 (QDNVKVSLAFGLSIATLAQ) form a helical membrane-spanning segment. Residues 66–68 (SVG) are Cytoplasmic-facing. An intramembrane segment occupies 69 to 82 (HISGAHLNPAVTLG). Positions 76 to 78 (NPA) match the NPA 1 motif. At 83 to 90 (LLLSCQIS) the chain is on the cytoplasmic side. Residues 91-109 (IFRALMYIIAQCVGAIVAT) form a helical membrane-spanning segment. Residues 110–133 (AILSGITSSLTGNSLGRNDLADGV) are Extracellular-facing. The helical transmembrane segment at 134–153 (NSGQGLGIEIIGTLQLVLCV) threads the bilayer. Over 154 to 163 (LATTDRRRRD) the chain is Cytoplasmic. A helical transmembrane segment spans residues 164–181 (LGGSAPLAIGLSVALGHL). At 182–186 (LAIDY) the chain is on the extracellular side. An intramembrane segment occupies 187-199 (TGCGINPARSFGS). The short motif at 192–194 (NPA) is the NPA 2 element. At 200–206 (AVITHNF) the chain is on the extracellular side. A glycan (N-linked (GlcNAc...) asparagine) is linked at Asn-205. A helical transmembrane segment spans residues 207 to 224 (SNHWIFWVGPFIGGALAV). Topologically, residues 225–269 (LIYDFILAPRSSDLTDRVKVWTSGQVEEYDLDADDINSRVEMKPK) are cytoplasmic. Ser-247 is subject to Phosphoserine. Phosphotyrosine is present on Tyr-253. Position 262 is a phosphoserine (Ser-262).

Belongs to the MIP/aquaporin (TC 1.A.8) family. As to quaternary structure, homotetramer; each monomer provides an independent water pore. Component of the ankyrin-1 complex in the erythrocyte, composed of ANK1, RHCE, RHAG, SLC4A1, EPB42, GYPA, GYPB and AQP1. Interacts with EPHB2; involved in endolymph production in the inner ear. Identified in a complex with STOM. Interacts (via the N-terminal) with ANK1 (via ANK 1-5 repeats). Interacts (via the C-terminal) with EPB42. As to expression, detected in erythrocytes (at protein level). Expressed in a number of tissues including erythrocytes, renal tubules, retinal pigment epithelium, heart, lung, skeletal muscle, kidney and pancreas. Weakly expressed in brain, placenta and liver.

Its subcellular location is the cell membrane. The catalysed reaction is H2O(in) = H2O(out). The enzyme catalyses nitric oxide(out) = nitric oxide(in). It catalyses the reaction CO2(out) = CO2(in). It carries out the reaction glycerol(in) = glycerol(out). The catalysed reaction is H2O2(out) = H2O2(in). The enzyme catalyses K(+)(in) = K(+)(out). It catalyses the reaction Na(+)(in) = Na(+)(out). The water channel activity is inhibited by P-choloromercuribenzene sulphonate and diethylpyrocarbonate(DPPC). The glycerol channel activity is inhibited by P-choloromercuribenzene sulphonate, diethylpyrocarbonate(DPPC), phloretin and Cu(2+). Inhibited by mercury. In terms of biological role, forms a water channel that facilitates the transport of water across cell membranes, playing a crucial role in water homeostasis in various tissues. Could also be permeable to small solutes including hydrogen peroxide, glycerol and gases such as amonnia (NH3), nitric oxide (NO) and carbon dioxide (CO2). Recruited to the ankyrin-1 complex, a multiprotein complex of the erythrocyte membrane, it could be part of a CO2 metabolon, linking facilitated diffusion of CO2 across the membrane, anion exchange of Cl(-)/HCO3(-) and interconversion of dissolved CO2 and carbonic acid in the cytosol. In vitro, it shows non-selective gated cation channel activity and may be permeable to cations like K(+) and Na(+) in vivo. The polypeptide is Aquaporin-1 (Homo sapiens (Human)).